A 393-amino-acid polypeptide reads, in one-letter code: S-adenosylmethionine synthase (393 aa).

Residue His16 coordinates ATP. Residue Asp18 coordinates Mg(2+). K(+) is bound at residue Glu44. Residues Glu57 and Gln100 each contribute to the L-methionine site. Residues Gln100 to His110 are flexible loop. Residues Asp167 to Lys169, Arg238 to Phe239, Asp247, Arg253 to Lys254, Ala270, and Lys274 contribute to the ATP site. Asp247 lines the L-methionine pocket. Lys278 serves as a coordination point for L-methionine.

Belongs to the AdoMet synthase family. Homotetramer; dimer of dimers. Mg(2+) is required as a cofactor. Requires K(+) as cofactor.

The protein localises to the cytoplasm. It carries out the reaction L-methionine + ATP + H2O = S-adenosyl-L-methionine + phosphate + diphosphate. It participates in amino-acid biosynthesis; S-adenosyl-L-methionine biosynthesis; S-adenosyl-L-methionine from L-methionine: step 1/1. Catalyzes the formation of S-adenosylmethionine (AdoMet) from methionine and ATP. The overall synthetic reaction is composed of two sequential steps, AdoMet formation and the subsequent tripolyphosphate hydrolysis which occurs prior to release of AdoMet from the enzyme. This is S-adenosylmethionine synthase from Paracidovorax citrulli (strain AAC00-1) (Acidovorax citrulli).